Here is a 684-residue protein sequence, read N- to C-terminus: MPSLSTPPSQNLAFSPAASATSSRLTPSSKRSFYPHRLPDPTALCRCSSSSGSNSSSSSSSDDNPRWDSAIQDVLKSAIKRFDSVLSWYATLDNDDGEQGSENVEKIDDDWDWDRWKKHFDQVDDQDRLLSVLKSQLNRAIKREDYEDAARLKVAIAATATNDAVGKVMSTFYRALLEERYKDAVYLRDKAGAGLVGWWSGISEDVKDPFGLIVQITAEHGRYVARSYNPRQLSTSAAGAPLFEIFLTLDGKGNYKKQAVYLKWKEIFPDVPTMPSRTLTPGRFLTSPGRKEDTGNLAVESSEDEESDNSDDDSDLLEESSGFQSFLRDMIPGVKVKVMKVTAPGRVDKDFISKVIEQIADEEDEENDLDIEDIDVEDDTKAEIDEKNADIELESVTDEIIDNNGGREIAVKFVIGDIVDRLSGNQPLKESLRSPANLESVENSSFYLRLEKDLNVKESKGVEGTTLVDGKGSRQSRRRIENIMGDLAKSIEKEKKISVKMLKDVGELLSLTLSQAQNRQQLSGLTKFRRIDVTPSLDPLDGLYIGAHGLYTSEVIHLKRKFGQWKGGKESKKPTDIEFYEYVEAVKLTGDPYVPAGKVAFRAKIGRRYELPHKGLIPEEFGVIARYKGQGRLADPGFRNPRWVDGELVILDGKYVKGGPVVGFVYWAPEYHFVMFFNRLRLQA.

Residues 1–31 (MPSLSTPPSQNLAFSPAASATSSRLTPSSKR) show a composition bias toward polar residues. Residues 1-46 (MPSLSTPPSQNLAFSPAASATSSRLTPSSKRSFYPHRLPDPTALCR) constitute a chloroplast transit peptide. Residues 1 to 66 (MPSLSTPPSQ…SSSSSDDNPR (66 aa)) form a disordered region. A compositionally biased stretch (low complexity) spans 48 to 61 (SSSSGSNSSSSSSS). Residues 127 to 162 (DRLLSVLKSQLNRAIKREDYEDAARLKVAIAATATN) enclose the UVR domain. Positions 278–318 (TLTPGRFLTSPGRKEDTGNLAVESSEDEESDNSDDDSDLLE) are disordered. The span at 301 to 318 (SSEDEESDNSDDDSDLLE) shows a compositional bias: acidic residues.

It is found in the plastid. The protein localises to the chloroplast. Functionally, together with EX2, enables higher plants to perceive singlet oxygen as a stress signal in plastid that activates a genetically determined nuclear stress response program which triggers a programmed cell death (PCD). This transfer of singlet oxygen-induced stress-related signals from the plastid to the nucleus that triggers genetically controlled PCD pathway is unique to photosynthetic eukaryotes and operates under mild stress conditions, impeding photosystem II (PSII) without causing photooxidative damage of the plant. This is Protein EXECUTER 1, chloroplastic from Arabidopsis thaliana (Mouse-ear cress).